The chain runs to 397 residues: S-adenosylmethionine synthase (397 aa).

H17 lines the ATP pocket. D19 serves as a coordination point for Mg(2+). Residue E45 coordinates K(+). L-methionine-binding residues include E58 and Q101. Residues 101–111 are flexible loop; it reads QSPDIAQGVDK. ATP-binding positions include 176–178, 243–244, D252, 258–259, and K279; these read DGK, RF, and RK. D252 lines the L-methionine pocket. K283 provides a ligand contact to L-methionine.

This sequence belongs to the AdoMet synthase family. In terms of assembly, homotetramer; dimer of dimers. The cofactor is Mg(2+). K(+) serves as cofactor.

The protein localises to the cytoplasm. It catalyses the reaction L-methionine + ATP + H2O = S-adenosyl-L-methionine + phosphate + diphosphate. It participates in amino-acid biosynthesis; S-adenosyl-L-methionine biosynthesis; S-adenosyl-L-methionine from L-methionine: step 1/1. Functionally, catalyzes the formation of S-adenosylmethionine (AdoMet) from methionine and ATP. The overall synthetic reaction is composed of two sequential steps, AdoMet formation and the subsequent tripolyphosphate hydrolysis which occurs prior to release of AdoMet from the enzyme. The polypeptide is S-adenosylmethionine synthase (Staphylococcus aureus).